A 247-amino-acid polypeptide reads, in one-letter code: Protein NipSnap homolog 3A (247 aa).

Lysine 48 and lysine 166 each carry N6-acetyllysine.

Belongs to the NipSnap family.

The protein localises to the cytoplasm. It localises to the cytosol. This Pongo abelii (Sumatran orangutan) protein is Protein NipSnap homolog 3A (NIPSNAP3A).